The following is a 443-amino-acid chain: D-serine dehydratase (443 aa).

Residue Lys-118 is modified to N6-(pyridoxal phosphate)lysine.

The protein belongs to the serine/threonine dehydratase family. DsdA subfamily. As to quaternary structure, monomer. Requires pyridoxal 5'-phosphate as cofactor.

The enzyme catalyses D-serine = pyruvate + NH4(+). This Photorhabdus laumondii subsp. laumondii (strain DSM 15139 / CIP 105565 / TT01) (Photorhabdus luminescens subsp. laumondii) protein is D-serine dehydratase.